Consider the following 130-residue polypeptide: Small ribosomal subunit protein uS11c (130 aa).

Belongs to the universal ribosomal protein uS11 family. In terms of assembly, part of the 30S ribosomal subunit.

It localises to the plastid. The protein resides in the chloroplast. This is Small ribosomal subunit protein uS11c from Zygnema circumcarinatum (Green alga).